Here is a 335-residue protein sequence, read N- to C-terminus: Oligopeptide transport ATP-binding protein OppD (335 aa).

Residues 18-267 (LEVNDLRVTF…PVHPYSIGLL (250 aa)) form the ABC transporter domain. 54 to 61 (GESGSGKS) lines the ATP pocket.

Belongs to the ABC transporter superfamily. As to quaternary structure, the complex is composed of two ATP-binding proteins (OppD and OppF), two transmembrane proteins (OppB and OppC) and a solute-binding protein (OppA).

It is found in the cell inner membrane. The catalysed reaction is a [peptide](out) + ATP + H2O = a [peptide](in) + ADP + phosphate + H(+). It carries out the reaction L-alanyl-gamma-D-glutamyl-meso-2,6-diaminopimelate(out) + ATP + H2O = L-alanyl-gamma-D-glutamyl-meso-2,6-diaminopimelate(in) + ADP + phosphate + H(+). Functionally, part of the ABC transporter complex OppABCDF involved in the uptake of oligopeptides, including the cell wall murein tripeptide L-alanyl-gamma-D-glutamyl-meso-diaminopimelate. Responsible for energy coupling to the transport system. Plays an important nutritional role and is involved in the recycling of cell wall peptides. Binds ATP. This Salmonella typhimurium (strain LT2 / SGSC1412 / ATCC 700720) protein is Oligopeptide transport ATP-binding protein OppD.